Reading from the N-terminus, the 427-residue chain is 3-phosphoshikimate 1-carboxyvinyltransferase (427 aa).

3 residues coordinate 3-phosphoshikimate: Lys-22, Ser-23, and Arg-27. Lys-22 is a phosphoenolpyruvate binding site. Residues Gly-96 and Arg-124 each coordinate phosphoenolpyruvate. 3-phosphoshikimate is bound by residues Ser-169, Ser-170, Gln-171, Ser-197, Asp-313, Asn-336, and Lys-340. Gln-171 contacts phosphoenolpyruvate. Asp-313 serves as the catalytic Proton acceptor. Phosphoenolpyruvate contacts are provided by Arg-344, Arg-386, and Lys-411.

It belongs to the EPSP synthase family. As to quaternary structure, monomer.

It is found in the cytoplasm. It carries out the reaction 3-phosphoshikimate + phosphoenolpyruvate = 5-O-(1-carboxyvinyl)-3-phosphoshikimate + phosphate. It participates in metabolic intermediate biosynthesis; chorismate biosynthesis; chorismate from D-erythrose 4-phosphate and phosphoenolpyruvate: step 6/7. In terms of biological role, catalyzes the transfer of the enolpyruvyl moiety of phosphoenolpyruvate (PEP) to the 5-hydroxyl of shikimate-3-phosphate (S3P) to produce enolpyruvyl shikimate-3-phosphate and inorganic phosphate. This Escherichia coli O1:K1 / APEC protein is 3-phosphoshikimate 1-carboxyvinyltransferase.